Consider the following 119-residue polypeptide: Immunoglobulin heavy variable 3-49 (119 aa).

An N-terminal signal peptide occupies residues 1–19 (MEFGLSWVFLVAILKGVQC). A framework-1 region spans residues 20-44 (EVQLVESGGGLVQPGRSLRLSCTAS). Positions 20 to 119 (EVQLVESGGG…EDTAVYYCTR (100 aa)) constitute an Ig-like domain. Cysteines 41 and 117 form a disulfide. Positions 45–52 (GFTFGDYA) are complementarity-determining-1. Residues 53–69 (MSWVRQAPGKGLEWVGF) are framework-2. The interval 70–79 (IRSKAYGGTT) is complementarity-determining-2. The interval 80–117 (EYAASVKGRFTISRDDSKSIAYLQMNSLKTEDTAVYYC) is framework-3. The interval 118 to 119 (TR) is complementarity-determining-3.

Immunoglobulins are composed of two identical heavy chains and two identical light chains; disulfide-linked.

The protein localises to the secreted. It is found in the cell membrane. V region of the variable domain of immunoglobulin heavy chains that participates in the antigen recognition. Immunoglobulins, also known as antibodies, are membrane-bound or secreted glycoproteins produced by B lymphocytes. In the recognition phase of humoral immunity, the membrane-bound immunoglobulins serve as receptors which, upon binding of a specific antigen, trigger the clonal expansion and differentiation of B lymphocytes into immunoglobulins-secreting plasma cells. Secreted immunoglobulins mediate the effector phase of humoral immunity, which results in the elimination of bound antigens. The antigen binding site is formed by the variable domain of one heavy chain, together with that of its associated light chain. Thus, each immunoglobulin has two antigen binding sites with remarkable affinity for a particular antigen. The variable domains are assembled by a process called V-(D)-J rearrangement and can then be subjected to somatic hypermutations which, after exposure to antigen and selection, allow affinity maturation for a particular antigen. This Homo sapiens (Human) protein is Immunoglobulin heavy variable 3-49.